The primary structure comprises 345 residues: Phenylalanine--tRNA ligase alpha subunit (345 aa).

Mg(2+) is bound at residue Glu-253.

It belongs to the class-II aminoacyl-tRNA synthetase family. Phe-tRNA synthetase alpha subunit type 1 subfamily. Tetramer of two alpha and two beta subunits. Requires Mg(2+) as cofactor.

It localises to the cytoplasm. It carries out the reaction tRNA(Phe) + L-phenylalanine + ATP = L-phenylalanyl-tRNA(Phe) + AMP + diphosphate + H(+). The polypeptide is Phenylalanine--tRNA ligase alpha subunit (Lawsonia intracellularis (strain PHE/MN1-00)).